The following is a 65-amino-acid chain: Small ribosomal subunit protein eS31 (65 aa).

Positions 36, 39, 55, and 58 each coordinate Zn(2+). Residues 36–58 form a C4-type zinc finger; sequence CPKCGSVMAFHREPVPRWHCGKC.

Belongs to the eukaryotic ribosomal protein eS31 family. In terms of assembly, part of the 30S ribosomal subunit. It depends on Zn(2+) as a cofactor.

The sequence is that of Small ribosomal subunit protein eS31 from Pyrobaculum calidifontis (strain DSM 21063 / JCM 11548 / VA1).